Here is a 544-residue protein sequence, read N- to C-terminus: Chaperonin GroEL (544 aa).

Residues 30–33 (TLGP), lysine 51, 87–91 (DGTTT), glycine 415, 480–482 (DAA), and aspartate 496 each bind ATP.

This sequence belongs to the chaperonin (HSP60) family. As to quaternary structure, forms a cylinder of 14 subunits composed of two heptameric rings stacked back-to-back. Interacts with the co-chaperonin GroES.

Its subcellular location is the cytoplasm. It carries out the reaction ATP + H2O + a folded polypeptide = ADP + phosphate + an unfolded polypeptide.. Its function is as follows. Together with its co-chaperonin GroES, plays an essential role in assisting protein folding. The GroEL-GroES system forms a nano-cage that allows encapsulation of the non-native substrate proteins and provides a physical environment optimized to promote and accelerate protein folding. This Sulfurihydrogenibium sp. (strain YO3AOP1) protein is Chaperonin GroEL.